A 61-amino-acid chain; its full sequence is Small ribosomal subunit protein uS14 (61 aa).

Zn(2+) contacts are provided by C24, C27, C40, and C43.

The protein belongs to the universal ribosomal protein uS14 family. Zinc-binding uS14 subfamily. In terms of assembly, part of the 30S ribosomal subunit. Contacts proteins S3 and S10. Requires Zn(2+) as cofactor.

Binds 16S rRNA, required for the assembly of 30S particles and may also be responsible for determining the conformation of the 16S rRNA at the A site. The protein is Small ribosomal subunit protein uS14 of Thermotoga maritima (strain ATCC 43589 / DSM 3109 / JCM 10099 / NBRC 100826 / MSB8).